The primary structure comprises 337 residues: Ketol-acid reductoisomerase (NADP(+)) (337 aa).

Residues 1 to 180 (MQVYYDKDAD…GGTKGGVIET (180 aa)) form the KARI N-terminal Rossmann domain. NADP(+) contacts are provided by residues 24-27 (YGSQ), R47, and S51. The active site involves H106. G132 is a binding site for NADP(+). One can recognise a KARI C-terminal knotted domain in the interval 181–326 (TFREETETDL…AQLRAMMPWI (146 aa)). Residues D189, E193, E225, and E229 each contribute to the Mg(2+) site. S250 contacts substrate.

Belongs to the ketol-acid reductoisomerase family. Requires Mg(2+) as cofactor.

It carries out the reaction (2R)-2,3-dihydroxy-3-methylbutanoate + NADP(+) = (2S)-2-acetolactate + NADPH + H(+). The enzyme catalyses (2R,3R)-2,3-dihydroxy-3-methylpentanoate + NADP(+) = (S)-2-ethyl-2-hydroxy-3-oxobutanoate + NADPH + H(+). It participates in amino-acid biosynthesis; L-isoleucine biosynthesis; L-isoleucine from 2-oxobutanoate: step 2/4. The protein operates within amino-acid biosynthesis; L-valine biosynthesis; L-valine from pyruvate: step 2/4. Functionally, involved in the biosynthesis of branched-chain amino acids (BCAA). Catalyzes an alkyl-migration followed by a ketol-acid reduction of (S)-2-acetolactate (S2AL) to yield (R)-2,3-dihydroxy-isovalerate. In the isomerase reaction, S2AL is rearranged via a Mg-dependent methyl migration to produce 3-hydroxy-3-methyl-2-ketobutyrate (HMKB). In the reductase reaction, this 2-ketoacid undergoes a metal-dependent reduction by NADPH to yield (R)-2,3-dihydroxy-isovalerate. This Neisseria meningitidis serogroup C (strain 053442) protein is Ketol-acid reductoisomerase (NADP(+)).